We begin with the raw amino-acid sequence, 233 residues long: NAD-dependent protein deacylase (233 aa).

One can recognise a Deacetylase sirtuin-type domain in the interval 1–230; the sequence is MKNIMILSGA…ALDIENFMKD (230 aa). 9-28 contacts NAD(+); it reads GAGLSAPSGLKTFRDNDGLW. 2 residues coordinate substrate: Tyr53 and Arg56. 88–91 is an NAD(+) binding site; sequence QNVD. Catalysis depends on His106, which acts as the Proton acceptor. Cys114, Cys117, Cys133, and Cys136 together coordinate Zn(2+). NAD(+) is bound by residues 172–174 and 200–202; these read GTS and NLE.

Belongs to the sirtuin family. Class III subfamily. Zn(2+) is required as a cofactor.

It is found in the cytoplasm. It catalyses the reaction N(6)-acetyl-L-lysyl-[protein] + NAD(+) + H2O = 2''-O-acetyl-ADP-D-ribose + nicotinamide + L-lysyl-[protein]. The catalysed reaction is N(6)-succinyl-L-lysyl-[protein] + NAD(+) + H2O = 2''-O-succinyl-ADP-D-ribose + nicotinamide + L-lysyl-[protein]. In terms of biological role, NAD-dependent lysine deacetylase and desuccinylase that specifically removes acetyl and succinyl groups on target proteins. Modulates the activities of several proteins which are inactive in their acylated form. The polypeptide is NAD-dependent protein deacylase (Campylobacter jejuni subsp. jejuni serotype O:2 (strain ATCC 700819 / NCTC 11168)).